We begin with the raw amino-acid sequence, 319 residues long: L-lactate dehydrogenase 2 (319 aa).

NAD(+) is bound by residues valine 17, aspartate 38, lysine 43, tyrosine 69, and 83 to 84 (GA). Substrate is bound by residues glutamine 86 and arginine 92. NAD(+)-binding positions include serine 105, 122-124 (ATN), and serine 147. A substrate-binding site is contributed by 124 to 127 (NPVD). 152–155 (DSGR) is a binding site for substrate. Residues arginine 157 and histidine 172 each coordinate beta-D-fructose 1,6-bisphosphate. Histidine 179 (proton acceptor) is an active-site residue. Tyrosine 224 bears the Phosphotyrosine mark. Threonine 233 contributes to the substrate binding site.

It belongs to the LDH/MDH superfamily. LDH family. Homotetramer.

The protein localises to the cytoplasm. The enzyme catalyses (S)-lactate + NAD(+) = pyruvate + NADH + H(+). It functions in the pathway fermentation; pyruvate fermentation to lactate; (S)-lactate from pyruvate: step 1/1. Its activity is regulated as follows. Allosterically activated by fructose 1,6-bisphosphate (FBP). In terms of biological role, catalyzes the conversion of lactate to pyruvate. This Peribacillus psychrosaccharolyticus (Bacillus psychrosaccharolyticus) protein is L-lactate dehydrogenase 2.